The chain runs to 286 residues: Pyridoxal kinase PdxY (286 aa).

Substrate contacts are provided by residues serine 9 and 44–45; that span reads TQ. ATP is bound by residues aspartate 111, alanine 143, glutamate 148, lysine 181, and 208 to 211; that span reads RPLV. Aspartate 223 is a substrate binding site.

It belongs to the pyridoxine kinase family. PdxY subfamily. Homodimer. Mg(2+) is required as a cofactor.

It carries out the reaction pyridoxal + ATP = pyridoxal 5'-phosphate + ADP + H(+). It functions in the pathway cofactor metabolism; pyridoxal 5'-phosphate salvage; pyridoxal 5'-phosphate from pyridoxal: step 1/1. Its function is as follows. Pyridoxal kinase involved in the salvage pathway of pyridoxal 5'-phosphate (PLP). Catalyzes the phosphorylation of pyridoxal to PLP. This is Pyridoxal kinase PdxY from Yersinia pseudotuberculosis serotype I (strain IP32953).